The sequence spans 410 residues: Peptidase T (410 aa).

His77 serves as a coordination point for Zn(2+). Asp79 is a catalytic residue. Residue Asp140 participates in Zn(2+) binding. Catalysis depends on Glu174, which acts as the Proton acceptor. Zn(2+)-binding residues include Glu175, Asp197, and His379.

It belongs to the peptidase M20B family. The cofactor is Zn(2+).

The protein resides in the cytoplasm. It carries out the reaction Release of the N-terminal residue from a tripeptide.. Cleaves the N-terminal amino acid of tripeptides. This chain is Peptidase T, found in Desulfitobacterium hafniense (strain DSM 10664 / DCB-2).